Reading from the N-terminus, the 388-residue chain is Succinate--CoA ligase [ADP-forming] subunit beta (388 aa).

One can recognise an ATP-grasp domain in the interval 9-244 (KQLFARYGLP…QSQEDPREAQ (236 aa)). Residues lysine 46, 53-55 (GRG), glutamate 99, threonine 102, and glutamate 107 each bind ATP. Mg(2+)-binding residues include asparagine 199 and aspartate 213. Substrate is bound by residues asparagine 264 and 321–323 (GIV).

It belongs to the succinate/malate CoA ligase beta subunit family. In terms of assembly, heterotetramer of two alpha and two beta subunits. Requires Mg(2+) as cofactor.

It catalyses the reaction succinate + ATP + CoA = succinyl-CoA + ADP + phosphate. It carries out the reaction GTP + succinate + CoA = succinyl-CoA + GDP + phosphate. It functions in the pathway carbohydrate metabolism; tricarboxylic acid cycle; succinate from succinyl-CoA (ligase route): step 1/1. Functionally, succinyl-CoA synthetase functions in the citric acid cycle (TCA), coupling the hydrolysis of succinyl-CoA to the synthesis of either ATP or GTP and thus represents the only step of substrate-level phosphorylation in the TCA. The beta subunit provides nucleotide specificity of the enzyme and binds the substrate succinate, while the binding sites for coenzyme A and phosphate are found in the alpha subunit. This chain is Succinate--CoA ligase [ADP-forming] subunit beta, found in Salmonella choleraesuis (strain SC-B67).